A 123-amino-acid chain; its full sequence is Potassium voltage-gated channel subfamily E member 2 (123 aa).

Residues N6 and N29 are each glycosylated (N-linked (GlcNAc...) asparagine). The helical transmembrane segment at 49-69 (VILYLMVMIGMFSFIIVAILV) threads the bilayer. At 70–123 (STVKSKRREHSNDPYHQYIVEDWQEKYKSQILNLEESKATIHENIGAAGFKMSP) the chain is on the cytoplasmic side.

It belongs to the potassium channel KCNE family. As to quaternary structure, interacts with KCNB1. Associates with KCNH2/ERG1. May associate with KCNQ2 and KCNQ3. Associates with HCN1 and probably HCN2. Heteromultimer with KCNC2. Interacts with KCNC2. Interacts with KCNQ1; forms a heterooligomer complex that targets to the membrane raft and leading to currents with an apparently instantaneous activation, a rapid deactivation process and a linear current-voltage relationship and decreases the amplitude of the outward current. As to expression, highly expressed in brain, heart, skeletal muscle, pancreas, placenta, kidney, colon and thymus. A small but significant expression is found in liver, ovary, testis, prostate, small intestine and leukocytes. Very low expression, nearly undetectable, in lung and spleen.

Its subcellular location is the cell membrane. It localises to the apical cell membrane. Ancillary protein that functions as a regulatory subunit of the voltage-gated potassium (Kv) channel complex composed of pore-forming and potassium-conducting alpha subunits and of regulatory beta subunits. KCNE2 beta subunit modulates the gating kinetics and enhances stability of the channel complex. Alters the gating of the delayed rectifier Kv channel containing KCNB1 alpha subunit. Associates with KCNH2/HERG alpha subunit Kv channel to form the rapidly activating component of the delayed rectifying potassium current (IKr) in heart. May associate with KCNQ2 and/or KCNQ3 alpha subunits to modulate the native M-type current. May associate with HCN1 and HCN2 channel subunits to increase potassium current. Forms a heterooligomer complex with KCNQ1/KVLQT1 alpha subunits which leads to currents with an apparently instantaneous activation, a rapid deactivation process and a linear current-voltage relationship and decreases the amplitude of the outward current. KCNQ1-KCNE2 channel associates with Na(+)-coupled myo-inositol symporter in the apical membrane of choroid plexus epithelium and regulates the myo-inositol gradient between blood and cerebrospinal fluid with an impact on neuron excitability. This is Potassium voltage-gated channel subfamily E member 2 from Homo sapiens (Human).